The following is a 374-amino-acid chain: Ribosomal RNA large subunit methyltransferase G (374 aa).

Belongs to the methyltransferase superfamily. RlmG family.

Its subcellular location is the cytoplasm. It carries out the reaction guanosine(1835) in 23S rRNA + S-adenosyl-L-methionine = N(2)-methylguanosine(1835) in 23S rRNA + S-adenosyl-L-homocysteine + H(+). Its function is as follows. Specifically methylates the guanine in position 1835 (m2G1835) of 23S rRNA. In Photobacterium profundum (strain SS9), this protein is Ribosomal RNA large subunit methyltransferase G.